A 466-amino-acid polypeptide reads, in one-letter code: Coagulation factor IX (466 aa).

The signal sequence occupies residues 1–25 (MRCLNMIMAEPPGLITICLLGYLLG). A propeptide spanning residues 26-46 (ADCTVFLDHEDATKVLSRPKR) is cleaved from the precursor. Ca(2+)-binding residues include Tyr-47, Asn-48, Glu-53, Glu-54, Glu-61, Glu-63, Glu-66, Glu-67, Glu-72, Glu-73, and Glu-76. One can recognise a Gla domain in the interval 47-92 (YNSGKLEEFVQGNLERECMEEKCSFEEAREVFENTEKTTEFWKQYV). 4-carboxyglutamate occurs at positions 53, 54, 61, 63, 66, 67, 72, 73, 76, 79, and 82. Residue Glu-61 coordinates Mg(2+). A disulfide bridge connects residues Cys-64 and Cys-69. Residue Glu-66 participates in Mg(2+) binding. Glu-72 is a binding site for Mg(2+). Mg(2+) is bound at residue Glu-76. Residue Glu-82 coordinates Ca(2+). Glu-82 contributes to the Mg(2+) binding site. A glycan (O-linked (GalNAc...) threonine) is linked at Thr-85. Glu-86, Asp-93, Gly-94, and Gln-96 together coordinate Ca(2+). A 4-carboxyglutamate modification is found at Glu-86. Glu-86 contacts Mg(2+). Residues 93–129 (DGDQCESNPCLNGGICKDDINSYECWCQTGFEGKNCE) form the EGF-like 1; calcium-binding domain. 10 cysteine pairs are disulfide-bonded: Cys-97/Cys-108, Cys-102/Cys-117, Cys-119/Cys-128, Cys-134/Cys-145, Cys-141/Cys-155, Cys-157/Cys-170, Cys-178/Cys-340, Cys-257/Cys-273, Cys-387/Cys-401, and Cys-412/Cys-440. Ser-99 carries an O-linked (Glc...) serine glycan. The Ca(2+) site is built by Asp-110 and Asp-111. Asp-110 is subject to (3R)-3-hydroxyaspartate. The residue at position 114 (Ser-114) is a Phosphoserine. Positions 130–171 (LDVTCNIKNGRCKQFCKLDADNKVVCSCTTGYQLAEDQKSCE) constitute an EGF-like 2 domain. A propeptide spans 193 to 231 (AETLFLNMDYENSTTDYENSAEAEKNVDNVTQPLNDLTR) (activation peptide). A Sulfotyrosine modification is found at Tyr-202. The residue at position 205 (Ser-205) is a Phosphoserine. A Phosphothreonine; alternate modification is found at Thr-206. The O-linked (GalNAc...) threonine; alternate glycan is linked to Thr-206. Asn-221 carries an N-linked (GlcNAc...) asparagine glycan. O-linked (GalNAc...) threonine glycosylation is found at Thr-223 and Thr-230. A Peptidase S1 domain is found at 232-464 (IVGGKTAKPG…YVNWIKEKTK (233 aa)). The Charge relay system role is filled by His-272. Ca(2+)-binding residues include Glu-286, Asn-288, Glu-291, Glu-293, and Glu-296. Catalysis depends on Asp-320, which acts as the Charge relay system. Ser-416 functions as the Charge relay system in the catalytic mechanism.

This sequence belongs to the peptidase S1 family. As to quaternary structure, heterodimer of a light chain and a heavy chain; disulfide-linked. Interacts (inactive and activated) with F11 (activated) in calcium-dependent manner. Interacts with SERPINC1. In terms of processing, the iron and 2-oxoglutarate dependent 3-hydroxylation of aspartate and asparagine is (R) stereospecific within EGF domains. Activated by factor XIa, which excises the activation peptide. The propeptide can also be removed by snake venom protease. Activated by coagulation factor VIIa-tissue factor (F7-F3) complex in calcium-dependent manner. Post-translationally, predominantly O-glucosylated at Ser-99 by POGLUT1 in vitro.

Its subcellular location is the secreted. The enzyme catalyses Selective cleavage of Arg-|-Ile bond in factor X to form factor Xa.. Factor IX is a vitamin K-dependent plasma protein that participates in the intrinsic pathway of blood coagulation by converting factor X to its active form in the presence of Ca(2+) ions, phospholipids, and factor VIIIa. The protein is Coagulation factor IX (F9) of Felis catus (Cat).